Here is a 206-residue protein sequence, read N- to C-terminus: Urease accessory protein UreG (206 aa).

Residue 15–22 (GPVGSGKT) participates in GTP binding.

Belongs to the SIMIBI class G3E GTPase family. UreG subfamily. Homodimer. UreD, UreF and UreG form a complex that acts as a GTP-hydrolysis-dependent molecular chaperone, activating the urease apoprotein by helping to assemble the nickel containing metallocenter of UreC. The UreE protein probably delivers the nickel.

The protein resides in the cytoplasm. Its function is as follows. Facilitates the functional incorporation of the urease nickel metallocenter. This process requires GTP hydrolysis, probably effectuated by UreG. The polypeptide is Urease accessory protein UreG (Ralstonia pickettii (strain 12J)).